The sequence spans 1191 residues: DNA-directed RNA polymerase II subunit RPB2 (1191 aa).

Residue D799 coordinates Mg(2+). The segment at 842-903 is disordered; sequence ASTMGMRHGS…RKDHSTSLRH (62 aa). Positions 878 to 891 are enriched in polar residues; sequence TPISQDDAQGQASR. The segment covering 893-903 has biased composition (basic and acidic residues); it reads TRKDHSTSLRH. Residues C1123, C1126, C1141, and C1144 each coordinate Zn(2+). A C4-type zinc finger spans residues 1123–1144; that stretch reads CERCGLIAIANLKKNSFECRGC.

Belongs to the RNA polymerase beta chain family. Component of the RNA polymerase II (Pol II) complex consisting of 12 subunits.

It localises to the nucleus. The enzyme catalyses RNA(n) + a ribonucleoside 5'-triphosphate = RNA(n+1) + diphosphate. Its function is as follows. DNA-dependent RNA polymerase catalyzes the transcription of DNA into RNA using the four ribonucleoside triphosphates as substrates. Second largest component of RNA polymerase II which synthesizes mRNA precursors and many functional non-coding RNAs. Proposed to contribute to the polymerase catalytic activity and forms the polymerase active center together with the largest subunit. Pol II is the central component of the basal RNA polymerase II transcription machinery. It is composed of mobile elements that move relative to each other. RPB2 is part of the core element with the central large cleft, the clamp element that moves to open and close the cleft and the jaws that are thought to grab the incoming DNA template. The polypeptide is DNA-directed RNA polymerase II subunit RPB2 (RPB2) (Solanum lycopersicum (Tomato)).